The primary structure comprises 112 residues: MNETILVKIITPLSIAFEKQAKMVTMPGEEGMFGVLPNHAPMIVSLKAGLVQVYIDDIYNPQITYLVSSGVTEVTGSYVNIATETAINVTNLNEAEIATKLLELQKPLSEQH.

This sequence belongs to the ATPase epsilon chain family. As to quaternary structure, F-type ATPases have 2 components, CF(1) - the catalytic core - and CF(0) - the membrane proton channel. CF(1) has five subunits: alpha(3), beta(3), gamma(1), delta(1), epsilon(1). CF(0) has three main subunits: a, b and c.

The protein localises to the cell inner membrane. Its function is as follows. Produces ATP from ADP in the presence of a proton gradient across the membrane. The chain is ATP synthase epsilon chain from Rickettsia felis (strain ATCC VR-1525 / URRWXCal2) (Rickettsia azadi).